We begin with the raw amino-acid sequence, 80 residues long: Putative membrane protein insertion efficiency factor (80 aa).

This sequence belongs to the UPF0161 family.

Its subcellular location is the cell membrane. Its function is as follows. Could be involved in insertion of integral membrane proteins into the membrane. The protein is Putative membrane protein insertion efficiency factor of Shouchella clausii (strain KSM-K16) (Alkalihalobacillus clausii).